A 54-amino-acid polypeptide reads, in one-letter code: UPF0391 membrane protein BMEI0373 (54 aa).

2 consecutive transmembrane segments (helical) span residues 5–25 and 29–48; these read VLVF…GIAG and GIAQ…SLIA.

Belongs to the UPF0391 family.

The protein resides in the cell membrane. The protein is UPF0391 membrane protein BMEI0373 of Brucella melitensis biotype 1 (strain ATCC 23456 / CCUG 17765 / NCTC 10094 / 16M).